The primary structure comprises 89 residues: Small ribosomal subunit protein uS15 (89 aa).

This sequence belongs to the universal ribosomal protein uS15 family. In terms of assembly, part of the 30S ribosomal subunit. Forms a bridge to the 50S subunit in the 70S ribosome, contacting the 23S rRNA.

Its function is as follows. One of the primary rRNA binding proteins, it binds directly to 16S rRNA where it helps nucleate assembly of the platform of the 30S subunit by binding and bridging several RNA helices of the 16S rRNA. Functionally, forms an intersubunit bridge (bridge B4) with the 23S rRNA of the 50S subunit in the ribosome. The protein is Small ribosomal subunit protein uS15 of Oceanobacillus iheyensis (strain DSM 14371 / CIP 107618 / JCM 11309 / KCTC 3954 / HTE831).